A 651-amino-acid chain; its full sequence is Probable ATP-dependent helicase MJ0942 (651 aa).

Residues 6–255 enclose the Helicase ATP-binding domain; the sequence is YIKEKFPYPK…EIIEKYLTSR (250 aa). Residue 41–48 participates in ATP binding; sequence APTGVGKT. [4Fe-4S] cluster contacts are provided by Cys102, Cys149, and Cys154. The DEAH box signature appears at 195–198; that stretch reads DEAH. In terms of domain architecture, Helicase C-terminal spans 449 to 638; the sequence is NLLKILEAIN…NYEVMSLDMA (190 aa).

Belongs to the helicase family. DinG subfamily. Requires [4Fe-4S] cluster as cofactor.

The catalysed reaction is Couples ATP hydrolysis with the unwinding of duplex DNA at the replication fork by translocating in the 5'-3' direction. This creates two antiparallel DNA single strands (ssDNA). The leading ssDNA polymer is the template for DNA polymerase III holoenzyme which synthesizes a continuous strand.. It carries out the reaction ATP + H2O = ADP + phosphate + H(+). Functionally, might be a 5'-3' DNA helicase. The protein is Probable ATP-dependent helicase MJ0942 of Methanocaldococcus jannaschii (strain ATCC 43067 / DSM 2661 / JAL-1 / JCM 10045 / NBRC 100440) (Methanococcus jannaschii).